A 148-amino-acid chain; its full sequence is Large ribosomal subunit protein eL19 (148 aa).

Residues lysine 52–glycine 76 show a composition bias toward basic residues. Residues lysine 52 to methionine 95 form a disordered region.

It belongs to the eukaryotic ribosomal protein eL19 family. Part of the 50S ribosomal subunit.

Binds to the 23S rRNA. In Methanothermobacter thermautotrophicus (strain ATCC 29096 / DSM 1053 / JCM 10044 / NBRC 100330 / Delta H) (Methanobacterium thermoautotrophicum), this protein is Large ribosomal subunit protein eL19.